The sequence spans 668 residues: Threonine--tRNA ligase (668 aa).

The 64-residue stretch at 1 to 64 (MSEAIFLTFP…ADGKIEIITR (64 aa)) folds into the TGS domain. The catalytic stretch occupies residues 245–553 (DHRKLGREMD…LIENFAGHLP (309 aa)). The Zn(2+) site is built by Cys347, His398, and His530.

This sequence belongs to the class-II aminoacyl-tRNA synthetase family. In terms of assembly, homodimer. It depends on Zn(2+) as a cofactor.

It is found in the cytoplasm. It catalyses the reaction tRNA(Thr) + L-threonine + ATP = L-threonyl-tRNA(Thr) + AMP + diphosphate + H(+). Catalyzes the attachment of threonine to tRNA(Thr) in a two-step reaction: L-threonine is first activated by ATP to form Thr-AMP and then transferred to the acceptor end of tRNA(Thr). Also edits incorrectly charged L-seryl-tRNA(Thr). The chain is Threonine--tRNA ligase from Rhizobium leguminosarum bv. trifolii (strain WSM2304).